A 661-amino-acid chain; its full sequence is Peroxisomal acyl-coenzyme A oxidase 1 (661 aa).

A Phosphoserine modification is found at Ser26. N6-acetyllysine is present on Lys65. Lys89 and Lys90 each carry N6-succinyllysine. Thr139 contributes to the FAD binding site. N6-succinyllysine is present on Lys159. Gly178 is a binding site for FAD. Lys216 carries the N6-acetyllysine modification. The residue at position 241 (Lys241) is an N6-succinyllysine. N6-acetyllysine occurs at positions 255, 267, and 272. Residue Lys349 is modified to N6-succinyllysine. Catalysis depends on Glu421, which acts as the Proton acceptor. Lys437 and Lys446 each carry N6-acetyllysine; alternate. N6-succinyllysine; alternate occurs at positions 437 and 446. Lys500 bears the N6-acetyllysine mark. N6-acetyllysine; alternate is present on Lys512. Lys512 is subject to N6-succinyllysine; alternate. Lys542 is modified (N6-succinyllysine). The residue at position 637 (Lys637) is an N6-acetyllysine; alternate. N6-succinyllysine; alternate is present on Lys637. Lys643 is modified (N6-succinyllysine). Residue Ser649 is modified to Phosphoserine. Lys652 carries the N6-acetyllysine modification. N6-succinyllysine is present on Lys655. The Microbody targeting signal signature appears at 659–661; that stretch reads SKL.

Belongs to the acyl-CoA oxidase family. In terms of assembly, homodimer. Interacts with LONP2. It depends on FAD as a cofactor. Highest levels of isoform 1 are found in liver and kidney while highest levels of isoform 2 are found in white adipose tissue. Isoform 1 is expressed at higher levels than isoform 2 in liver and kidney while isoform 2 is expressed at higher levels in brain, heart, lung, muscle, white adipose tissue and testis.

It localises to the peroxisome. The enzyme catalyses a 2,3-saturated acyl-CoA + O2 = a (2E)-enoyl-CoA + H2O2. It carries out the reaction hexadecanoyl-CoA + O2 = (2E)-hexadecenoyl-CoA + H2O2. It catalyses the reaction dodecanoyl-CoA + O2 = (2E)-dodecenoyl-CoA + H2O2. The catalysed reaction is octanoyl-CoA + O2 = (2E)-octenoyl-CoA + H2O2. The enzyme catalyses decanoyl-CoA + O2 = (2E)-decenoyl-CoA + H2O2. It carries out the reaction tetradecanoyl-CoA + O2 = (2E)-tetradecenoyl-CoA + H2O2. It catalyses the reaction hexadecanedioyl-CoA + O2 = (2E)-hexadecenedioyl-CoA + H2O2. The catalysed reaction is tetracosanoyl-CoA + O2 = (2E)-tetracosenoyl-CoA + H2O2. The enzyme catalyses glutaryl-CoA + O2 = (2E)-glutaconyl-CoA + H2O2. It carries out the reaction hexanoyl-CoA + O2 = (2E)-hexenoyl-CoA + H2O2. It catalyses the reaction octadecanoyl-CoA + O2 = (2E)-octadecenoyl-CoA + H2O2. The catalysed reaction is (5Z,8Z,11Z,14Z,17Z)-eicosapentaenoyl-CoA + O2 = (2E,5Z,8Z,11Z,14Z,17Z)-icosahexaenoyl-CoA + H2O2. The enzyme catalyses (6Z,9Z,12Z,15Z,18Z,21Z)-tetracosahexaenoyl-CoA + O2 = (2E,6Z,9Z,12Z,15Z,18Z,21Z)-tetracosaheptaenoyl-CoA + H2O2. Its pathway is lipid metabolism; peroxisomal fatty acid beta-oxidation. Functionally, involved in the initial and rate-limiting step of peroxisomal beta-oxidation of straight-chain saturated and unsaturated very-long-chain fatty acids. Catalyzes the desaturation of fatty acyl-CoAs such as palmitoyl-CoA (hexadecanoyl-CoA) to 2-trans-enoyl-CoAs ((2E)-enoyl-CoAs) such as (2E)-hexadecenoyl-CoA, and donates electrons directly to molecular oxygen (O(2)), thereby producing hydrogen peroxide (H(2)O(2)). Its function is as follows. Shows highest activity against medium-chain fatty acyl-CoAs. Shows optimum activity with a chain length of 10 carbons (decanoyl-CoA) in vitro. In terms of biological role, is active against a much broader range of substrates and shows activity towards long-chain acyl-CoAs. The sequence is that of Peroxisomal acyl-coenzyme A oxidase 1 from Mus musculus (Mouse).